A 309-amino-acid chain; its full sequence is tRNA dimethylallyltransferase (309 aa).

An ATP-binding site is contributed by 10-17 (GPTAVGKT). 12 to 17 (TAVGKT) contacts substrate. Positions 35-38 (DSMQ) are interaction with substrate tRNA.

The protein belongs to the IPP transferase family. In terms of assembly, monomer. The cofactor is Mg(2+).

It carries out the reaction adenosine(37) in tRNA + dimethylallyl diphosphate = N(6)-dimethylallyladenosine(37) in tRNA + diphosphate. In terms of biological role, catalyzes the transfer of a dimethylallyl group onto the adenine at position 37 in tRNAs that read codons beginning with uridine, leading to the formation of N6-(dimethylallyl)adenosine (i(6)A). This chain is tRNA dimethylallyltransferase, found in Clostridium beijerinckii (strain ATCC 51743 / NCIMB 8052) (Clostridium acetobutylicum).